Here is a 285-residue protein sequence, read N- to C-terminus: MKYIGAHVSAAGGLANAAIRAAEIDATAFALFTKNQRQWRAAPLTTQTIDKFKAACEKYHYTSAQILPHDSYLINLGHPVAEALEKSRDAFIDEMQRCEQLGLSLLNFHPGSHLMQISEEDCLARIAESINIALDKTQGVTAVIENSAGQGSNLGFKFEHLAAIIDGVEDKSRVGVCIDTCHAFAAGYDLRTPAECEKTFADFARIVGFKYLRGMHLNDAKSTFGSRVDRHHSLGEGNIGHDAFRWIMQDDRFDGIPLILETINPDIWAEEIAWLKAQQTEKAVA.

Zn(2+)-binding residues include His-69, His-109, Glu-145, Asp-179, His-182, His-216, Asp-229, His-231, and Glu-261.

The protein belongs to the AP endonuclease 2 family. Zn(2+) is required as a cofactor.

The enzyme catalyses Endonucleolytic cleavage to 5'-phosphooligonucleotide end-products.. Endonuclease IV plays a role in DNA repair. It cleaves phosphodiester bonds at apurinic or apyrimidinic (AP) sites, generating a 3'-hydroxyl group and a 5'-terminal sugar phosphate. This is Probable endonuclease 4 from Escherichia coli O81 (strain ED1a).